Consider the following 594-residue polypeptide: MSIRRLPEHLVNRIAAGEVVERPASALKELVENSIDAGARRISVSLSEGGLSAIDVADDGCGMTPDEIALALERHATSKLPDDAIEAVTTLGFRGEALPSIGSVADLTIESRVRGADGWHRRVDHGELVGEGPAALPPGTRIRVSNLFAKVPARRKFLRSARAEYAACVDVIKRLAMARPDIGFTLEHEGRRAILVAPDEQRVDRVAALTDRDLAQNSVAVDFRREAVSLTGVAGLPTFNRGVADHQFLFVNGRPVKDRLLIGAVRGAYQDMLARDRHPVIALFVELPGDQVDVNVHPAKTEVRFRDPGLVRGMIVGGLRAALDEAGHRSVQRPSVAALGNWQAGGLPTASSTAPAIPNGFAFGAAAERSGQGSVWDRVADFAPAPMARAEPAYSPPPQQASYPMGVARGQVAATYIVAEAEDGLVIVDQHAAHERLVLERMRRAMADGGVARQALLLPEVVELDEVGCDRLETRIAELAEMGLELERFGPKAMLVRATPALLGQGDVHGLIVDLADELAAYDEALSLKERLDHVAATMACHGSVRAGRTLSVAEMNALLREMEVTPHSGQCNHGRPTWIKLGHGDIEKLFGRK.

This sequence belongs to the DNA mismatch repair MutL/HexB family.

Its function is as follows. This protein is involved in the repair of mismatches in DNA. It is required for dam-dependent methyl-directed DNA mismatch repair. May act as a 'molecular matchmaker', a protein that promotes the formation of a stable complex between two or more DNA-binding proteins in an ATP-dependent manner without itself being part of a final effector complex. The chain is DNA mismatch repair protein MutL from Rhizorhabdus wittichii (strain DSM 6014 / CCUG 31198 / JCM 15750 / NBRC 105917 / EY 4224 / RW1) (Sphingomonas wittichii).